Here is a 431-residue protein sequence, read N- to C-terminus: 3-phosphoshikimate 1-carboxyvinyltransferase (431 aa).

Residues K20, S21, and R25 each contribute to the 3-phosphoshikimate site. K20 is a phosphoenolpyruvate binding site. Positions 91 and 119 each coordinate phosphoenolpyruvate. 3-phosphoshikimate-binding residues include S164, Q166, D317, and K344. Residue Q166 coordinates phosphoenolpyruvate. Catalysis depends on D317, which acts as the Proton acceptor. Phosphoenolpyruvate contacts are provided by R348 and R390.

The protein belongs to the EPSP synthase family. As to quaternary structure, monomer.

The protein resides in the cytoplasm. It carries out the reaction 3-phosphoshikimate + phosphoenolpyruvate = 5-O-(1-carboxyvinyl)-3-phosphoshikimate + phosphate. Its pathway is metabolic intermediate biosynthesis; chorismate biosynthesis; chorismate from D-erythrose 4-phosphate and phosphoenolpyruvate: step 6/7. Functionally, catalyzes the transfer of the enolpyruvyl moiety of phosphoenolpyruvate (PEP) to the 5-hydroxyl of shikimate-3-phosphate (S3P) to produce enolpyruvyl shikimate-3-phosphate and inorganic phosphate. The polypeptide is 3-phosphoshikimate 1-carboxyvinyltransferase (Aquifex aeolicus (strain VF5)).